A 261-amino-acid polypeptide reads, in one-letter code: Carnitinyl-CoA dehydratase (261 aa).

The active-site Nucleophile is the Glu-111. The Proton acceptor role is filled by Glu-131.

The protein belongs to the enoyl-CoA hydratase/isomerase family.

It carries out the reaction (R)-carnitinyl-CoA = crotonobetainyl-CoA + H2O. It functions in the pathway amine and polyamine metabolism; carnitine metabolism. Catalyzes the reversible dehydration of L-carnitinyl-CoA to crotonobetainyl-CoA. In Salmonella dublin (strain CT_02021853), this protein is Carnitinyl-CoA dehydratase.